Here is a 55-residue protein sequence, read N- to C-terminus: UPF0391 membrane protein RALTA_A0099 (55 aa).

2 helical membrane-spanning segments follow: residues 5-25 (ALVFFVIALIAAIFGFGGIAA) and 30-50 (IAKILFFIFLVVALVAAVMGL).

It belongs to the UPF0391 family.

It localises to the cell membrane. The polypeptide is UPF0391 membrane protein RALTA_A0099 (Cupriavidus taiwanensis (strain DSM 17343 / BCRC 17206 / CCUG 44338 / CIP 107171 / LMG 19424 / R1) (Ralstonia taiwanensis (strain LMG 19424))).